Here is a 216-residue protein sequence, read N- to C-terminus: Cytosolic-abundant heat soluble protein 2 (216 aa).

The span at 1–11 (MSRDQGSTEYD) shows a compositional bias: polar residues. Disordered stretches follow at residues 1–34 (MSRD…DVRT) and 66–91 (RISG…KDRE). The span at 12-22 (ANQRQEQHQEQ) shows a compositional bias: basic and acidic residues. Polar residues-rich tracts occupy residues 25–34 (TSYTHTDVRT) and 68–77 (SGQSSETHVQ). Residues 81-180 (EMEAEARKDR…ARLATQALDQ (100 aa)) are a coiled coil. CAHS motif regions lie at residues 115–133 (YRKQ…LEKQ) and 152–170 (QKRQ…LDRE).

The protein belongs to the Cytosolic-abundant heat soluble protein (CAHS) family.

It is found in the cytoplasm. Its function is as follows. CAHS proteins are cytosolic heat soluble proteins that seem to contribute to the anhydrobiosis in tardigrades, but their specific mechanisms are yet to be identified. It is possible that protection during anhydrobiosis might occur via the stabilization of vitrifying small molecules such as sugars, but not via the direct glass transition of CAHS proteins themselves. The polypeptide is Cytosolic-abundant heat soluble protein 2 (Ramazzottius varieornatus (Water bear)).